The chain runs to 82 residues: Protein RALF-like 8 (82 aa).

Positions 1-28 (MGMSKSIKVILSLALVVFLALAGTKVEA) are cleaved as a signal peptide. 2 disulfide bridges follow: cysteine 47–cysteine 55 and cysteine 67–cysteine 73.

This sequence belongs to the plant rapid alkalinization factor (RALF) family. In terms of tissue distribution, expressed in leaves and flowers.

It localises to the secreted. Its function is as follows. Cell signaling peptide that may regulate plant stress, growth, and development. Mediates a rapid alkalinization of extracellular space by mediating a transient increase in the cytoplasmic Ca(2+) concentration leading to a calcium-dependent signaling events through a cell surface receptor and a concomitant activation of some intracellular mitogen-activated protein kinases. The sequence is that of Protein RALF-like 8 (RALFL8) from Arabidopsis thaliana (Mouse-ear cress).